Reading from the N-terminus, the 361-residue chain is Phosphoserine aminotransferase (361 aa).

R43 serves as a coordination point for L-glutamate. Pyridoxal 5'-phosphate contacts are provided by residues A77 to S78, W103, T153, D173, and Q196. At K197 the chain carries N6-(pyridoxal phosphate)lysine. A pyridoxal 5'-phosphate-binding site is contributed by N238–T239.

It belongs to the class-V pyridoxal-phosphate-dependent aminotransferase family. SerC subfamily. As to quaternary structure, homodimer. It depends on pyridoxal 5'-phosphate as a cofactor.

Its subcellular location is the cytoplasm. It catalyses the reaction O-phospho-L-serine + 2-oxoglutarate = 3-phosphooxypyruvate + L-glutamate. It carries out the reaction 4-(phosphooxy)-L-threonine + 2-oxoglutarate = (R)-3-hydroxy-2-oxo-4-phosphooxybutanoate + L-glutamate. The protein operates within amino-acid biosynthesis; L-serine biosynthesis; L-serine from 3-phospho-D-glycerate: step 2/3. It participates in cofactor biosynthesis; pyridoxine 5'-phosphate biosynthesis; pyridoxine 5'-phosphate from D-erythrose 4-phosphate: step 3/5. Catalyzes the reversible conversion of 3-phosphohydroxypyruvate to phosphoserine and of 3-hydroxy-2-oxo-4-phosphonooxybutanoate to phosphohydroxythreonine. The sequence is that of Phosphoserine aminotransferase from Pseudomonas aeruginosa (strain ATCC 15692 / DSM 22644 / CIP 104116 / JCM 14847 / LMG 12228 / 1C / PRS 101 / PAO1).